Reading from the N-terminus, the 614-residue chain is Zinc finger protein ztf-7 (614 aa).

Residues 1–10 (MSTSGSGGGN) show a composition bias toward gly residues. The disordered stretch occupies residues 1 to 160 (MSTSGSGGGN…SRPKKPEKMS (160 aa)). A compositionally biased stretch (polar residues) spans 18–41 (NVASSPNANPKKNADTESSGGSKN). The span at 54 to 69 (GSNSRNGSRTNSVSNS) shows a compositional bias: low complexity. Over residues 74-83 (NRKDWTDRKS) the composition is skewed to basic and acidic residues. A compositionally biased stretch (acidic residues) spans 132-150 (DYSDEYELDEPFSDSDDED). 2 consecutive C2H2-type zinc fingers follow at residues 356-380 (NECIYCEKIFPDRNTLMDHMRKRNH) and 447-470 (VVCLLCDASEDNAQSLLEHMKTTH).

This sequence belongs to the ZNF277 family. As to quaternary structure, interacts with rps-2.

The protein resides in the cytoplasm. Its function is as follows. Probable transcription factor. Limits the ability to tolerate cold environment or cold-warm stress. In complex with rps-2, mediates the cold-warm shock response by promoting translocation of components of the RNA exosome from the nucleolus to nucleoplasm. This is Zinc finger protein ztf-7 from Caenorhabditis elegans.